The following is a 112-amino-acid chain: Gastrula zinc finger protein XlCGF16.1 (112 aa).

4 C2H2-type zinc fingers span residues 6–28 (YNCSECHKRFRSKSGFVKHQKTH), 34–56 (FVCFVCEQRFVCHSALIGHQRIH), 62–84 (FSCTECGKCFSRRSHLNSHHKTH), and 90–112 (FLCFACGKCFASRSHLTAHHRTH).

This sequence belongs to the krueppel C2H2-type zinc-finger protein family.

The protein resides in the nucleus. May be involved in transcriptional regulation. In Xenopus laevis (African clawed frog), this protein is Gastrula zinc finger protein XlCGF16.1.